We begin with the raw amino-acid sequence, 307 residues long: MISVKVPASSANLGAGFDCMGVALKLYNIIEVEEIEKGLIITSSPDDPSIAKDENNLVFRAMKTVFDEVGWYPRGLRINLINEIPLTRGLGSSAACISGGIYAANLLCGGKLSEEEMIYLAAKMEGHPDNSTPAMIGGLVFAVLEDKKVNYIKFVVPARLKFAVFIPDFQLSTEYARNILPKYIEFKDAVFNIGRATLFASAITTGNYELLPAATQDRLHQPYRKKLIPDFDKIVNLSLEAGAKGAFLSGAGPSIIALVDENYEIFEQNVKNALASMDLVANWDFMILEADNSGATVFSVQSTSLKR.

Position 85–95 (85–95 (PLTRGLGSSAA)) interacts with ATP.

Belongs to the GHMP kinase family. Homoserine kinase subfamily.

The protein resides in the cytoplasm. The enzyme catalyses L-homoserine + ATP = O-phospho-L-homoserine + ADP + H(+). Its pathway is amino-acid biosynthesis; L-threonine biosynthesis; L-threonine from L-aspartate: step 4/5. In terms of biological role, catalyzes the ATP-dependent phosphorylation of L-homoserine to L-homoserine phosphate. The sequence is that of Homoserine kinase from Caldicellulosiruptor bescii (strain ATCC BAA-1888 / DSM 6725 / KCTC 15123 / Z-1320) (Anaerocellum thermophilum).